The sequence spans 223 residues: Pyridoxine/pyridoxamine 5'-phosphate oxidase (223 aa).

Residues 9–12 (RVGY) and K76 contribute to the substrate site. FMN-binding positions include 71 to 76 (RTVLCK), 86 to 87 (FT), K93, and Q115. Residues Y133, R137, and S141 each contribute to the substrate site. FMN contacts are provided by residues 150–151 (QS) and W196. A substrate-binding site is contributed by 202 to 204 (RMH). Residue R206 coordinates FMN.

This sequence belongs to the pyridoxamine 5'-phosphate oxidase family. In terms of assembly, homodimer. FMN is required as a cofactor.

The enzyme catalyses pyridoxamine 5'-phosphate + O2 + H2O = pyridoxal 5'-phosphate + H2O2 + NH4(+). It catalyses the reaction pyridoxine 5'-phosphate + O2 = pyridoxal 5'-phosphate + H2O2. It functions in the pathway cofactor metabolism; pyridoxal 5'-phosphate salvage; pyridoxal 5'-phosphate from pyridoxamine 5'-phosphate: step 1/1. Its pathway is cofactor metabolism; pyridoxal 5'-phosphate salvage; pyridoxal 5'-phosphate from pyridoxine 5'-phosphate: step 1/1. In terms of biological role, catalyzes the oxidation of either pyridoxine 5'-phosphate (PNP) or pyridoxamine 5'-phosphate (PMP) into pyridoxal 5'-phosphate (PLP). This chain is Pyridoxine/pyridoxamine 5'-phosphate oxidase, found in Rhodococcus jostii (strain RHA1).